We begin with the raw amino-acid sequence, 249 residues long: Proteasome subunit alpha (249 aa).

Belongs to the peptidase T1A family. As to quaternary structure, the 20S proteasome core is composed of 14 alpha and 14 beta subunits that assemble into four stacked heptameric rings, resulting in a barrel-shaped structure. The two inner rings, each composed of seven catalytic beta subunits, are sandwiched by two outer rings, each composed of seven alpha subunits. The catalytic chamber with the active sites is on the inside of the barrel. Has a gated structure, the ends of the cylinder being occluded by the N-termini of the alpha-subunits. Is capped at one or both ends by the proteasome regulatory ATPase, PAN.

It localises to the cytoplasm. With respect to regulation, the formation of the proteasomal ATPase PAN-20S proteasome complex, via the docking of the C-termini of PAN into the intersubunit pockets in the alpha-rings, triggers opening of the gate for substrate entry. Interconversion between the open-gate and close-gate conformations leads to a dynamic regulation of the 20S proteasome proteolysis activity. Its function is as follows. Component of the proteasome core, a large protease complex with broad specificity involved in protein degradation. The polypeptide is Proteasome subunit alpha (Methanosarcina barkeri (strain Fusaro / DSM 804)).